Consider the following 264-residue polypeptide: MDNRPIGFLDSGVGGLTVVRELMRQLPHEEVIYIGDSARAPYGPRPAEQIRAYTWQLVNFLLTKDVKMIVIACNTATAVVWEEVKEKLDIPVLGVILPGASAAIKSTASGRIGVIGTPMTVSSDIYRQKIEALSPEMQVESLACPKFVPLVESNELHSSLTKKVVYETLQPLAGRVDTLVLGCTHYPLLRPIIQNRMGPDVKLIDSGAECVRDISVLLNYFEINRSREKQELNHQFYTTANAKSFSEIAESWLRLKVNVEHVSL.

Residues 10 to 11 (DS) and 42 to 43 (YG) contribute to the substrate site. C73 functions as the Proton donor/acceptor in the catalytic mechanism. Substrate is bound at residue 74 to 75 (NT). The active-site Proton donor/acceptor is the C183. 184-185 (TH) is a substrate binding site.

It belongs to the aspartate/glutamate racemases family.

The catalysed reaction is L-glutamate = D-glutamate. The protein operates within cell wall biogenesis; peptidoglycan biosynthesis. In terms of biological role, provides the (R)-glutamate required for cell wall biosynthesis. The sequence is that of Glutamate racemase from Streptococcus sanguinis (strain SK36).